Reading from the N-terminus, the 332-residue chain is Putative ketol-acid reductoisomerase 3 (332 aa).

The region spanning 1 to 182 (MDKTVLDASL…AIPGGIAVIS (182 aa)) is the KARI N-terminal Rossmann domain. The KARI C-terminal knotted domain maps to 183 to 329 (SFEEEALLDL…KELYKILRRK (147 aa)).

This sequence belongs to the ketol-acid reductoisomerase family.

The enzyme catalyses (2R)-2,3-dihydroxy-3-methylbutanoate + NADP(+) = (2S)-2-acetolactate + NADPH + H(+). It catalyses the reaction (2R,3R)-2,3-dihydroxy-3-methylpentanoate + NADP(+) = (S)-2-ethyl-2-hydroxy-3-oxobutanoate + NADPH + H(+). The protein operates within amino-acid biosynthesis; L-isoleucine biosynthesis; L-isoleucine from 2-oxobutanoate: step 2/4. Its pathway is amino-acid biosynthesis; L-valine biosynthesis; L-valine from pyruvate: step 2/4. This chain is Putative ketol-acid reductoisomerase 3 (ilvC3), found in Saccharolobus solfataricus (strain ATCC 35092 / DSM 1617 / JCM 11322 / P2) (Sulfolobus solfataricus).